We begin with the raw amino-acid sequence, 186 residues long: Peptidyl-tRNA hydrolase (186 aa).

Residue Y14 participates in tRNA binding. H19 serves as the catalytic Proton acceptor. TRNA contacts are provided by F64, N66, and N112.

It belongs to the PTH family. Monomer.

The protein localises to the cytoplasm. The catalysed reaction is an N-acyl-L-alpha-aminoacyl-tRNA + H2O = an N-acyl-L-amino acid + a tRNA + H(+). Hydrolyzes ribosome-free peptidyl-tRNAs (with 1 or more amino acids incorporated), which drop off the ribosome during protein synthesis, or as a result of ribosome stalling. In terms of biological role, catalyzes the release of premature peptidyl moieties from peptidyl-tRNA molecules trapped in stalled 50S ribosomal subunits, and thus maintains levels of free tRNAs and 50S ribosomes. The chain is Peptidyl-tRNA hydrolase from Listeria monocytogenes serotype 4b (strain CLIP80459).